Consider the following 326-residue polypeptide: MRVENNNVSGQNHDPEQIDLIDLLVQLWRGKMTIIISVIVAIALAIGYLAVAKEKWTSTAIITQPDVGQIAGYNNAMNVIYGQAAPKVSDLQETLIGRFSSAFSALAETLDNQEEREKLTIEPSVKNQQLPLTVSYVGQTAEGAQMKLAQYIQQVDDKVNQELEKDLKDNIALGRKNLQDSLRTQEVVAQEQKDLRIRQIQEALQYANQAQVTKPQIQQTGEDITQDTLFLLGSEALESMIKHEATRPLVFSPNYYQTRQNLLDIESLKVDDLDIHAYRYVMKPMLPIRRDSPKKAITLILAVLLGGMVGAGIVLGRNALRNYNAK.

Residues 1 to 31 (MRVENNNVSGQNHDPEQIDLIDLLVQLWRGK) are Cytoplasmic-facing. The chain crosses the membrane as a helical span at residues 32 to 52 (MTIIISVIVAIALAIGYLAVA). Topologically, residues 53–295 (KEKWTSTAII…LPIRRDSPKK (243 aa)) are periplasmic. A helical membrane pass occupies residues 296-316 (AITLILAVLLGGMVGAGIVLG). Topologically, residues 317–326 (RNALRNYNAK) are cytoplasmic.

This sequence belongs to the WzzB/Cld/Rol family. In terms of assembly, homodimer.

It is found in the cell inner membrane. It participates in bacterial outer membrane biogenesis; lipopolysaccharide biosynthesis. Functionally, confers a modal distribution of chain length on the O-antigen component of lipopolysaccharide (LPS). Gives rise to a reduced number of short chain molecules and increases in numbers of longer molecules. In Escherichia coli (strain K12), this protein is Chain length determinant protein (wzzB).